Here is a 1807-residue protein sequence, read N- to C-terminus: Vitellogenin-A2 (1807 aa).

An N-terminal signal peptide occupies residues 1-15; the sequence is MKGIVLALLLALAGS. Positions 24–664 constitute a Vitellogenin domain; sequence FSESKISVYN…SANTMFPVFI (641 aa). The interval 953–974 is disordered; sequence TSAEGASMMEDSSEMGPKKYSA. Residue Asn1094 is glycosylated (N-linked (GlcNAc...) asparagine). The interval 1095–1320 is disordered; the sequence is ETALYRSKQK…SSESSSSSSE (226 aa). A compositionally biased stretch (basic residues) spans 1101–1111; that stretch reads SKQKKKNKIHN. Residues 1112–1123 are compositionally biased toward basic and acidic residues; sequence RRLDAEVVEARK. Residues 1126-1163 show a composition bias toward low complexity; it reads SSLSSSSSSSSSSSSSSSSSSSSSSSSSPSSSSSSSYS. Residues 1187-1198 show a composition bias toward basic and acidic residues; it reads QNKKRNLQENRK. A compositionally biased stretch (low complexity) spans 1205 to 1232; the sequence is SSSSSSSSSSSSSSSSSSSSSSSSSSSS. Residues 1233–1247 show a composition bias toward basic and acidic residues; sequence EENRPHKNRQHDNKQ. 2 stretches are compositionally biased toward low complexity: residues 1263 to 1276 and 1309 to 1320; these read SESS…SSSE and SSSSESSSSSSE. The 179-residue stretch at 1536–1714 folds into the VWFD domain; it reads GECKVAQDQI…SWILPAESCS (179 aa). Intrachain disulfides connect Cys1538–Cys1677 and Cys1561–Cys1713.

Produced by the liver, secreted into the blood and then sequestered by receptor mediated endocytosis into growing oocytes, where it is generally cleaved, giving rise to the respective yolk components.

Functionally, precursor of the major egg-yolk proteins that are sources of nutrients during early development of oviparous organisms. The polypeptide is Vitellogenin-A2 (Xenopus laevis (African clawed frog)).